Reading from the N-terminus, the 184-residue chain is Helix-loop-helix protein ngn-1 (184 aa).

Residues 1–55 (MYHHSPFYPHHLQTGEQDLDMERENDMDQNSKNSTQKPVKREKRRYRCRKRSPAT) form a disordered region. A compositionally biased stretch (polar residues) spans 28-37 (DQNSKNSTQK). Residues 38 to 52 (PVKREKRRYRCRKRS) are compositionally biased toward basic residues. A basic motif region spans residues 62–75 (VRRDKANARERRRM). Positions 62–114 (VRRDKANARERRRMNSLNDALEHLRGILPALPDEPKMTKIETLRKAQEYIASL) constitute a bHLH domain. Residues 76–114 (NSLNDALEHLRGILPALPDEPKMTKIETLRKAQEYIASL) are helix-loop-helix motif. Residues 164–184 (SNPPSQMYYHHHHQSPSFPHH) form a disordered region. Over residues 172–184 (YHHHHQSPSFPHH) the composition is skewed to basic residues.

Interacts with hlh-2; the interaction is direct.

It localises to the nucleus. Its function is as follows. Acts as a transcriptional regulator. Regulates expression of various genes, including homeobox protein unc-42 and helix-loop-helix protein hlh-34. Required for embryonic viability, neuromuscular development, organization of the nerve ring and neuronal cell body location. Regulates AIY neuron axon morphology and cell fate. Plays a role in cell autonomously establishing a neuronal left-right asymmetry. Involved in regulating glial specification. The polypeptide is Helix-loop-helix protein ngn-1 (Caenorhabditis elegans).